Here is a 175-residue protein sequence, read N- to C-terminus: ATP synthase subunit delta (175 aa).

Belongs to the ATPase delta chain family. F-type ATPases have 2 components, F(1) - the catalytic core - and F(0) - the membrane proton channel. F(1) has five subunits: alpha(3), beta(3), gamma(1), delta(1), epsilon(1). F(0) has three main subunits: a(1), b(2) and c(10-14). The alpha and beta chains form an alternating ring which encloses part of the gamma chain. F(1) is attached to F(0) by a central stalk formed by the gamma and epsilon chains, while a peripheral stalk is formed by the delta and b chains.

Its subcellular location is the cell inner membrane. F(1)F(0) ATP synthase produces ATP from ADP in the presence of a proton or sodium gradient. F-type ATPases consist of two structural domains, F(1) containing the extramembraneous catalytic core and F(0) containing the membrane proton channel, linked together by a central stalk and a peripheral stalk. During catalysis, ATP synthesis in the catalytic domain of F(1) is coupled via a rotary mechanism of the central stalk subunits to proton translocation. Its function is as follows. This protein is part of the stalk that links CF(0) to CF(1). It either transmits conformational changes from CF(0) to CF(1) or is implicated in proton conduction. This chain is ATP synthase subunit delta, found in Xanthomonas oryzae pv. oryzae (strain MAFF 311018).